The chain runs to 210 residues: Insulin receptor (210 aa).

The Fibronectin type-III domain occupies 1 to 96 (VSNSSSQIIL…SQILKELEES (96 aa)). 3 N-linked (GlcNAc...) asparagine glycosylation sites follow: N3, N21, and N68. The interval 55–78 (WSPPFESEDSQKHNQSEYEDSAGE) is disordered. Residues 103–111 (EDYLHNVVF) are insulin-binding. The interval 116-169 (TSSGTGAEDPRPSRKRRSLGDVGNVTVAVPTVAAFPNTSSTSTPTSPEEHRPFE) is disordered. Residues 133 to 210 (SLGDVGNVTV…EERCSVAAYV (78 aa)) are Extracellular-facing. The segment covering 137-161 (VGNVTVAVPTVAAFPNTSSTSTPTS) has biased composition (low complexity). N-linked (GlcNAc...) asparagine glycosylation is found at N139 and N152. Cysteines 195 and 204 form a disulfide.

This sequence belongs to the protein kinase superfamily. Tyr protein kinase family. Insulin receptor subfamily. As to quaternary structure, tetramer of 2 alpha and 2 beta chains linked by disulfide bonds. The alpha chains carry the insulin-binding regions, while the beta chains carry the kinase domain. Forms a hybrid receptor with IGF1R, the hybrid is a tetramer consisting of 1 alpha chain and 1 beta chain of INSR and 1 alpha chain and 1 beta chain of IGF1R. Interacts with SORBS1 but dissociates from it following insulin stimulation. Binds SH2B2. Activated form of INSR interacts (via phosphorylated Tyrosine) with the PTB/PID domains of IRS1 and SHC1. The sequences surrounding the phosphorylated NPXY motif contribute differentially to either IRS1 or SHC1 recognition. Interacts (via tyrosines in the C-terminus) with IRS2 (via PTB domain and 591-786 AA); the 591-786 would be the primary anchor of IRS2 to INSR while the PTB domain would have a stabilizing action on the interaction with INSR. Interacts with the SH2 domains of the 85 kDa regulatory subunit of PI3K (PIK3R1) in vitro, when autophosphorylated on tyrosine residues. Interacts with SOCS7. Interacts with SOCS3. Interacts with SOCS1. Interacts with CAV2 (tyrosine-phosphorylated form); the interaction is increased with 'Tyr-27'phosphorylation of CAV2. Interacts with ARRB2. Interacts with GRB10; this interaction blocks the association between IRS1/IRS2 and INSR, significantly reduces insulin-stimulated tyrosine phosphorylation of IRS1 and IRS2 and thus decreases insulin signaling. Interacts with GRB7. Interacts with PDPK1. Interacts with GRB14 (via BPS domain). Interacts (via subunit alpha) with ENPP1 (via 485-599 AA); this interaction blocks autophosphorylation. Interacts with PTPRE. Interacts with STAT5B (via SH2 domain). Interacts with PTPRF. Interacts with ATIC; ATIC together with PRKAA2/AMPK2 and HACD3/PTPLAD1 is proposed to be part of a signaling netwok regulating INSR autophosphorylation and endocytosis. Interacts with the insulin receptor SORL1; this interaction strongly increases its surface exposure, hence strengthens insulin signal reception. Interacts (tyrosine phosphorylated) with CCDC88A/GIV (via SH2-like region); binding requires autophosphorylation of the INSR C-terminal region. Interacts with GNAI3; the interaction is probably mediated by CCDC88A/GIV. Interacts with LMBRD1. Interacts (in response to insulin stimulation) with NCK1; this interaction may recruit PTPN1 to mediate INSR dephosphorylation. After being transported from the endoplasmic reticulum to the Golgi apparatus, the single glycosylated precursor is further glycosylated and then cleaved, followed by its transport to the plasma membrane. Post-translationally, autophosphorylated on tyrosine residues in response to insulin. Dephosphorylated by PTPN1, PTPRE and PTPRF. Dephosphorylated by PTPN2; down-regulates insulin-induced signaling. In terms of processing, S-nitrosylation by BLVRB inhibits the receptor tyrosine kinase, thereby inhibiting insulin signaling.

It localises to the cell membrane. Its subcellular location is the late endosome. It is found in the lysosome. The enzyme catalyses L-tyrosyl-[protein] + ATP = O-phospho-L-tyrosyl-[protein] + ADP + H(+). With respect to regulation, activated in response to insulin. Autophosphorylation activates the kinase activity. PTPN1, PTPRE and PTPRF dephosphorylate important tyrosine residues, thereby reducing INSR activity. Inhibited by ENPP1. GRB10 and GRB14 inhibit the catalytic activity of the INSR, they block access of substrates to the activated receptor. SOCS1 and SOCS3 act as negative regulators of INSR activity, they bind to the activated INRS and interfere with the phosphorylation of INSR substrates. In terms of biological role, receptor tyrosine kinase which mediates the pleiotropic actions of insulin. Binding of insulin leads to phosphorylation of several intracellular substrates, including, insulin receptor substrates (IRS1, 2, 3, 4), SHC, GAB1, CBL and other signaling intermediates. Each of these phosphorylated proteins serve as docking proteins for other signaling proteins that contain Src-homology-2 domains (SH2 domain) that specifically recognize different phosphotyrosine residues, including the p85 regulatory subunit of PI3K and SHP2. Phosphorylation of IRSs proteins lead to the activation of two main signaling pathways: the PI3K-AKT/PKB pathway, which is responsible for most of the metabolic actions of insulin, and the Ras-MAPK pathway, which regulates expression of some genes and cooperates with the PI3K pathway to control cell growth and differentiation. Binding of the SH2 domains of PI3K to phosphotyrosines on IRS1 leads to the activation of PI3K and the generation of phosphatidylinositol-(3, 4, 5)-triphosphate (PIP3), a lipid second messenger, which activates several PIP3-dependent serine/threonine kinases, such as PDPK1 and subsequently AKT/PKB. The net effect of this pathway is to produce a translocation of the glucose transporter SLC2A4/GLUT4 from cytoplasmic vesicles to the cell membrane to facilitate glucose transport. Moreover, upon insulin stimulation, activated AKT/PKB is responsible for: anti-apoptotic effect of insulin by inducing phosphorylation of BAD; regulates the expression of gluconeogenic and lipogenic enzymes by controlling the activity of the winged helix or forkhead (FOX) class of transcription factors. Another pathway regulated by PI3K-AKT/PKB activation is mTORC1 signaling pathway which regulates cell growth and metabolism and integrates signals from insulin. AKT mediates insulin-stimulated protein synthesis by phosphorylating TSC2 thereby activating mTORC1 pathway. The Ras/RAF/MAP2K/MAPK pathway is mainly involved in mediating cell growth, survival and cellular differentiation of insulin. Phosphorylated IRS1 recruits GRB2/SOS complex, which triggers the activation of the Ras/RAF/MAP2K/MAPK pathway. In addition to binding insulin, the insulin receptor can bind insulin-like growth factors (IGFI and IGFII). When present in a hybrid receptor with IGF1R, binds IGF1. In adipocytes, inhibits lipolysis. The chain is Insulin receptor (INSR) from Macaca mulatta (Rhesus macaque).